The sequence spans 810 residues: Eukaryotic translation initiation factor 3 subunit C (810 aa).

A compositionally biased stretch (polar residues) spans 1 to 11 (MSRFFATNYNY). Positions 1–98 (MSRFFATNYN…DSDESDEEDG (98 aa)) are disordered. The span at 12–33 (DETSSSSEEDLLSSSEELLSSS) shows a compositional bias: low complexity. Positions 34 to 58 (EEGELSDDSLFNDESESESDFDSDD) are enriched in acidic residues. A PCI domain is found at 605 to 780 (YHQHINLDLV…TYIVIEKGDE (176 aa)).

This sequence belongs to the eIF-3 subunit C family. In terms of assembly, component of the eukaryotic translation initiation factor 3 (eIF-3) complex.

The protein resides in the cytoplasm. Functionally, component of the eukaryotic translation initiation factor 3 (eIF-3) complex, which is involved in protein synthesis of a specialized repertoire of mRNAs and, together with other initiation factors, stimulates binding of mRNA and methionyl-tRNAi to the 40S ribosome. The eIF-3 complex specifically targets and initiates translation of a subset of mRNAs involved in cell proliferation. The protein is Eukaryotic translation initiation factor 3 subunit C of Candida glabrata (strain ATCC 2001 / BCRC 20586 / JCM 3761 / NBRC 0622 / NRRL Y-65 / CBS 138) (Yeast).